The sequence spans 599 residues: Glucose-6-phosphate 1-dehydrogenase 3, chloroplastic (599 aa).

Residues 1–18 (MSSLSCPTYRSRTSSSSP) are compositionally biased toward low complexity. Residues 1-23 (MSSLSCPTYRSRTSSSSPFLSNH) are disordered. The N-terminal 66 residues, 1-66 (MSSLSCPTYR…RSQRRSVQSS (66 aa)), are a transit peptide targeting the chloroplast. Val67 is modified (N-acetylvaline). NADP(+) is bound by residues 119–126 (GASGDLAK) and Arg153. A disulfide bond links Cys171 and Cys179. Lys256 contributes to the NADP(+) binding site. Residues Lys256, 286-290 (HYLGK), Glu324, and Asp343 contribute to the D-glucose 6-phosphate site. The active-site Proton acceptor is the His348. Lys441 serves as a coordination point for NADP(+). D-glucose 6-phosphate contacts are provided by Lys444 and Arg449. Residues Arg454 and Arg483 each contribute to the NADP(+) site. Gln485 provides a ligand contact to D-glucose 6-phosphate. NADP(+)-binding positions include 491 to 493 (YLK) and Arg576.

Belongs to the glucose-6-phosphate dehydrogenase family. As to quaternary structure, forms homodimer. Interacts with G6PD1. In terms of tissue distribution, expressed in roots, flowers and siliques.

The protein localises to the plastid. Its subcellular location is the chloroplast stroma. It catalyses the reaction D-glucose 6-phosphate + NADP(+) = 6-phospho-D-glucono-1,5-lactone + NADPH + H(+). It functions in the pathway carbohydrate degradation; pentose phosphate pathway; D-ribulose 5-phosphate from D-glucose 6-phosphate (oxidative stage): step 1/3. Its activity is regulated as follows. Regulated by metabolites. Post-translationally inactivated by cysteine-mediated redox modification via the ferredoxin-thioredoxin system in the light and this avoids futile cycles with photosynthetic CO2 fixation. In terms of biological role, catalyzes the rate-limiting step of the oxidative pentose-phosphate pathway, which represents a route for the dissimilation of carbohydrates besides glycolysis. The main function of this enzyme is to provide reducing power (NADPH) and pentose phosphates for fatty acid and nucleic acid synthesis which are involved in membrane synthesis and cell division. The sequence is that of Glucose-6-phosphate 1-dehydrogenase 3, chloroplastic from Arabidopsis thaliana (Mouse-ear cress).